Here is a 548-residue protein sequence, read N- to C-terminus: Pentatricopeptide repeat-containing protein At1g62680, mitochondrial (548 aa).

Residues 1 to 43 (MQRSIAMTAKRFLHRNLLENGKPRTASSPSFSHCSSCRCWVRA) constitute a mitochondrion transit peptide. PPR repeat units follow at residues 84 to 118 (SIVD…GIRN), 119 to 153 (DLYT…GYEP), 154 to 188 (DRVT…GYKP), 189 to 223 (DIVA…GIRP), 224 to 258 (NVVT…KITP), 259 to 293 (NVIT…SIDP), 294 to 328 (DIVT…GCLA), 329 to 363 (DVVS…GLVS), 364 to 398 (NTVT…GISP), 399 to 433 (DIWT…EMDL), 434 to 468 (DIVT…GLKP), and 469 to 503 (DIVT…GLMK).

Belongs to the PPR family. P subfamily.

It is found in the mitochondrion. This is Pentatricopeptide repeat-containing protein At1g62680, mitochondrial from Arabidopsis thaliana (Mouse-ear cress).